A 163-amino-acid chain; its full sequence is Ribosome maturation factor RimM (163 aa).

One can recognise a PRC barrel domain in the interval glutamate 92–glutamate 162.

It belongs to the RimM family. Binds ribosomal protein uS19.

The protein resides in the cytoplasm. In terms of biological role, an accessory protein needed during the final step in the assembly of 30S ribosomal subunit, possibly for assembly of the head region. Essential for efficient processing of 16S rRNA. May be needed both before and after RbfA during the maturation of 16S rRNA. It has affinity for free ribosomal 30S subunits but not for 70S ribosomes. The chain is Ribosome maturation factor RimM from Rubrobacter xylanophilus (strain DSM 9941 / JCM 11954 / NBRC 16129 / PRD-1).